Consider the following 384-residue polypeptide: NAD(P) transhydrogenase subunit alpha part 1 (384 aa).

The segment at 126 to 136 (PRISRAQSMDI) is RQD loop; involved in interaction with PntB. NAD(+) is bound by residues 127–129 (RIS), 132–135 (QSMD), 180–182 (VGV), 202–204 (DVR), Gly234, Gln247, and Leu266.

Belongs to the AlaDH/PNT family. Heterotrimer of two alpha chains and a beta (PntB) chain; in Rhodospirillum, the alpha chain is made of two subunits (PntAA and PntAB) and forms a dimer.

It carries out the reaction NAD(+) + NADPH + H(+)(in) = NADH + NADP(+) + H(+)(out). The transhydrogenation between NADH and NADP is coupled to respiration and ATP hydrolysis and functions as a proton pump across the membrane. The chain is NAD(P) transhydrogenase subunit alpha part 1 (pntAA) from Rhodospirillum rubrum (strain ATCC 11170 / ATH 1.1.1 / DSM 467 / LMG 4362 / NCIMB 8255 / S1).